A 402-amino-acid polypeptide reads, in one-letter code: Argininosuccinate synthase (402 aa).

Residues 13–21 (AYSGGLDTS) and Ala-40 contribute to the ATP site. L-citrulline is bound by residues Tyr-91 and Ser-96. Position 121 (Gly-121) interacts with ATP. Residues Thr-123, Asn-127, and Asp-128 each contribute to the L-aspartate site. Position 127 (Asn-127) interacts with L-citrulline. Positions 131, 180, 189, 265, and 277 each coordinate L-citrulline.

The protein belongs to the argininosuccinate synthase family. Type 1 subfamily. In terms of assembly, homotetramer.

Its subcellular location is the cytoplasm. It catalyses the reaction L-citrulline + L-aspartate + ATP = 2-(N(omega)-L-arginino)succinate + AMP + diphosphate + H(+). It functions in the pathway amino-acid biosynthesis; L-arginine biosynthesis; L-arginine from L-ornithine and carbamoyl phosphate: step 2/3. The polypeptide is Argininosuccinate synthase (Leptospira biflexa serovar Patoc (strain Patoc 1 / Ames)).